Reading from the N-terminus, the 437-residue chain is Enolase (437 aa).

Q162 is a (2R)-2-phosphoglycerate binding site. The active-site Proton donor is the E204. Mg(2+) is bound by residues D251, E297, and D324. The (2R)-2-phosphoglycerate site is built by K349, R378, S379, and K400. K349 serves as the catalytic Proton acceptor.

Belongs to the enolase family. It depends on Mg(2+) as a cofactor.

The protein resides in the cytoplasm. The protein localises to the secreted. It is found in the cell surface. The catalysed reaction is (2R)-2-phosphoglycerate = phosphoenolpyruvate + H2O. The protein operates within carbohydrate degradation; glycolysis; pyruvate from D-glyceraldehyde 3-phosphate: step 4/5. Its function is as follows. Catalyzes the reversible conversion of 2-phosphoglycerate (2-PG) into phosphoenolpyruvate (PEP). It is essential for the degradation of carbohydrates via glycolysis. The polypeptide is Enolase (Chlorobaculum parvum (strain DSM 263 / NCIMB 8327) (Chlorobium vibrioforme subsp. thiosulfatophilum)).